The chain runs to 668 residues: MDKTAAAQRIKWLSSEIERHNRLYYEQDMPEITDAEYDALFRELKELEASYPDLALPDSPTGRVGGRPVAKFTQVRHTTPMLSLENAFTEKDIVDFDDRMKRFLGLSGAEEIGYVCEPKMDGVAVELVYRDGLLAIGSTRGDGLVGEEVTQNLKTIKDIPLRLQTEEPPGLLTVRGEVYLPLEPFRKFNQEREEAGEPPFANPRNAAAGSLRQLDSKITAKRPLSIFCYAPGEVDGVAFQSQSDFLSTIPTWRIPVNPLTRLVPGVQGVLDYYNEMMEKRDDLPYEIDGVVVKVDRFSLQRDLGEKSRSPRWAIAWKFPPRQATTVVNDIVPQVGRTGVITPVAHLEPVNVSGVMVSRATLHNWEEMERKDIRRGDTVVVERAGDVIPAVVQVLVEKRQGSETLLPVPQACPVCGGEVVRIPGEVAVRCVGLNCPAQALERVKHFAARRAMDIDGLGEKFIEQLLNLKLIRNVADIYRLTEEDFMQFERMGKKLAENLLNSIAASKERELSRLIFALGIRHVGEHTAKLLASAFGSMENLAAASEEELTSIREVGPQVAASIADFFKSEENLEVLRELKEHGVNPRVEEKRVGGRFTGKTFVFTGALEKFTRDEAKKMVELEGGHAAGSVSKKTDYVVAGADAGSKLDKAQQLGVRVLSEDDFLELMQ.

Residues 34 to 38 (DAEYD), 83 to 84 (SL), and E117 contribute to the NAD(+) site. K119 (N6-AMP-lysine intermediate) is an active-site residue. NAD(+)-binding residues include R140, E177, K293, and K317. Zn(2+) is bound by residues C411, C414, C429, and C434. In terms of domain architecture, BRCT spans 591–668 (RVGGRFTGKT…SEDDFLELMQ (78 aa)).

Belongs to the NAD-dependent DNA ligase family. LigA subfamily. Mg(2+) serves as cofactor. Requires Mn(2+) as cofactor.

It carries out the reaction NAD(+) + (deoxyribonucleotide)n-3'-hydroxyl + 5'-phospho-(deoxyribonucleotide)m = (deoxyribonucleotide)n+m + AMP + beta-nicotinamide D-nucleotide.. DNA ligase that catalyzes the formation of phosphodiester linkages between 5'-phosphoryl and 3'-hydroxyl groups in double-stranded DNA using NAD as a coenzyme and as the energy source for the reaction. It is essential for DNA replication and repair of damaged DNA. The polypeptide is DNA ligase (Citrifermentans bemidjiense (strain ATCC BAA-1014 / DSM 16622 / JCM 12645 / Bem) (Geobacter bemidjiensis)).